The following is a 603-amino-acid chain: Golgin subfamily A member 8B (603 aa).

Disordered regions lie at residues 1–82, 95–125, 398–419, and 460–492; these read MAEE…NSRS, LKQQ…ELEG, TSAE…ESSG, and PGDS…GAAG. Residues 46–66 are compositionally biased toward low complexity; sequence AASGGCHSSEASSSASSSLHA. Polar residues predominate over residues 69-82; that stretch reads SPCQEQAAVLNSRS. Coiled-coil stretches lie at residues 82-173 and 212-440; these read SIKI…GELE and LKGH…LELG. The segment covering 100–124 has biased composition (basic and acidic residues); that stretch reads KQVEHQLEEEKKANNEKQKAERELE. A compositionally biased stretch (gly residues) spans 469 to 482; that stretch reads PGGGHHQAGPGQGG. A golgi-targeting domain region spans residues 491–603; the sequence is AGDGVAACGS…CWAWLPRRRR (113 aa).

This sequence belongs to the GOLGA8 family. In terms of tissue distribution, highly expressed in brain, heart and kidney. Detected at lower levels in liver, thymus, spleen, lung and peripheral blood leukocytes.

It is found in the golgi apparatus. The protein localises to the golgi stack membrane. May be involved in maintaining Golgi structure. This Homo sapiens (Human) protein is Golgin subfamily A member 8B (GOLGA8B).